The primary structure comprises 1149 residues: Eukaryotic translation initiation factor 3 subunit A (1149 aa).

The PCI domain maps to 317–498; it reads IQRMTSHVLI…HSVHFGTDLS (182 aa). 2 disordered regions span residues 496–515 and 811–1149; these read DLSE…QSMP and EEER…KHHR. Over residues 811–885 the composition is skewed to basic and acidic residues; that stretch reads EEERRRIEEE…APRGEKEERG (75 aa). The span at 886–895 shows a compositional bias: gly residues; that stretch reads GGGGGGGAWR. Over residues 908–924 the composition is skewed to basic and acidic residues; that stretch reads AKPESDWRNAREAREPA. Over residues 925–937 the composition is skewed to low complexity; the sequence is PESAGASSAAAPA. 3 stretches are compositionally biased toward basic and acidic residues: residues 961-970, 1005-1095, and 1113-1132; these read RPPRGDDREP, GPMR…DRRG, and EPAK…KEAR.

It belongs to the eIF-3 subunit A family. As to quaternary structure, component of the eukaryotic translation initiation factor 3 (eIF-3) complex.

The protein resides in the cytoplasm. Functionally, RNA-binding component of the eukaryotic translation initiation factor 3 (eIF-3) complex, which is involved in protein synthesis of a specialized repertoire of mRNAs and, together with other initiation factors, stimulates binding of mRNA and methionyl-tRNAi to the 40S ribosome. The eIF-3 complex specifically targets and initiates translation of a subset of mRNAs involved in cell proliferation. The polypeptide is Eukaryotic translation initiation factor 3 subunit A (Culex quinquefasciatus (Southern house mosquito)).